We begin with the raw amino-acid sequence, 87 residues long: U3-theraphotoxin-Hhn1a 15 (87 aa).

The signal sequence occupies residues 1–24 (MVNMKASMFLTFAGLVLLLVVCYA). Positions 25-52 (SESEEKEFPKEMLSSIFAVDNDFKQEER) are excised as a propeptide. 3 cysteine pairs are disulfide-bonded: Cys-54-Cys-67, Cys-61-Cys-72, and Cys-66-Cys-79.

It belongs to the neurotoxin 10 (Hwtx-1) family. 51 (Hntx-8) subfamily. Hntx-8 sub-subfamily. In terms of tissue distribution, expressed by the venom gland.

It is found in the secreted. In terms of biological role, ion channel inhibitor. The protein is U3-theraphotoxin-Hhn1a 15 of Cyriopagopus hainanus (Chinese bird spider).